Consider the following 170-residue polypeptide: Protein-export protein SecB (170 aa).

The protein belongs to the SecB family. In terms of assembly, homotetramer, a dimer of dimers. One homotetramer interacts with 1 SecA dimer.

It localises to the cytoplasm. Functionally, one of the proteins required for the normal export of preproteins out of the cell cytoplasm. It is a molecular chaperone that binds to a subset of precursor proteins, maintaining them in a translocation-competent state. It also specifically binds to its receptor SecA. The protein is Protein-export protein SecB of Xanthomonas campestris pv. campestris (strain 8004).